The following is a 280-amino-acid chain: Thylakoid lumenal protein TL20.3, chloroplastic (280 aa).

The transit peptide at 1 to 59 (MAFSSLSPLPMKSLDISRSSSSVSRSPYHFQRYLLRRLQLSSRSNLEIKDSSNTREGCC) directs the protein to the chloroplast. Residues 60–90 (SSAESNTWKRILSAAMAAAVIASSSGVPAMA) constitute a thylakoid transit peptide. Pentapeptide repeat domains lie at 124–163 (ENFR…NFSG) and 169–208 (TLMD…DFSD).

Interacts with thioredoxin. Interacts in vitro with LTO1.

The protein resides in the plastid. The protein localises to the chloroplast thylakoid lumen. Its function is as follows. Pentapeptide repeat protein of unknown function. Subject to degradation when reduced. This chain is Thylakoid lumenal protein TL20.3, chloroplastic, found in Arabidopsis thaliana (Mouse-ear cress).